We begin with the raw amino-acid sequence, 55 residues long: Large ribosomal subunit protein bL32c (55 aa).

This sequence belongs to the bacterial ribosomal protein bL32 family.

The protein resides in the plastid. The protein localises to the chloroplast. In Daucus carota (Wild carrot), this protein is Large ribosomal subunit protein bL32c.